The following is a 203-amino-acid chain: Small ribosomal subunit protein uS4 (203 aa).

The region spanning 93 to 156 (RRLDNVVYRL…MKVPAILEAV (64 aa)) is the S4 RNA-binding domain.

The protein belongs to the universal ribosomal protein uS4 family. In terms of assembly, part of the 30S ribosomal subunit. Contacts protein S5. The interaction surface between S4 and S5 is involved in control of translational fidelity.

One of the primary rRNA binding proteins, it binds directly to 16S rRNA where it nucleates assembly of the body of the 30S subunit. In terms of biological role, with S5 and S12 plays an important role in translational accuracy. This chain is Small ribosomal subunit protein uS4, found in Streptococcus pyogenes serotype M49 (strain NZ131).